The chain runs to 425 residues: UDP-N-acetylglucosamine 1-carboxyvinyltransferase (425 aa).

Position 22 to 23 (22 to 23 (KN)) interacts with phosphoenolpyruvate. R91 is a UDP-N-acetyl-alpha-D-glucosamine binding site. C115 functions as the Proton donor in the catalytic mechanism. C115 is modified (2-(S-cysteinyl)pyruvic acid O-phosphothioketal). UDP-N-acetyl-alpha-D-glucosamine is bound by residues 120-124 (RPIDL), D305, and V327.

Belongs to the EPSP synthase family. MurA subfamily.

The protein resides in the cytoplasm. The catalysed reaction is phosphoenolpyruvate + UDP-N-acetyl-alpha-D-glucosamine = UDP-N-acetyl-3-O-(1-carboxyvinyl)-alpha-D-glucosamine + phosphate. It functions in the pathway cell wall biogenesis; peptidoglycan biosynthesis. In terms of biological role, cell wall formation. Adds enolpyruvyl to UDP-N-acetylglucosamine. The sequence is that of UDP-N-acetylglucosamine 1-carboxyvinyltransferase from Coprothermobacter proteolyticus (strain ATCC 35245 / DSM 5265 / OCM 4 / BT).